The following is a 525-amino-acid chain: AarF domain-containing protein kinase 1 (525 aa).

A Protein kinase domain is found at 148 to 477 (SFDDTPLGAA…HKKRDAGSFF (330 aa)). ATP-binding positions include 154 to 162 (LGAASLAQV) and Lys-176. Asp-308 (proton acceptor) is an active-site residue.

The protein belongs to the protein kinase superfamily. ADCK protein kinase family.

The protein resides in the mitochondrion. Functionally, appears to be essential for maintaining mitochondrial cristae formation and mitochondrial function by acting via YME1L1 in a kinase-independent manner to regulate essential mitochondrial structural proteins OPA1 and IMMT. The action of this enzyme is not yet clear. It is not known if it has protein kinase activity and what type of substrate it would phosphorylate (Ser, Thr or Tyr). The chain is AarF domain-containing protein kinase 1 (Adck1) from Mus musculus (Mouse).